The following is a 236-amino-acid chain: 7-cyano-7-deazaguanine synthase (236 aa).

Position 7 to 17 (7 to 17 (CSGGLDSVSLA)) interacts with ATP. Residues C185, C193, C196, and C199 each coordinate Zn(2+).

It belongs to the QueC family. Zn(2+) serves as cofactor.

It carries out the reaction 7-carboxy-7-deazaguanine + NH4(+) + ATP = 7-cyano-7-deazaguanine + ADP + phosphate + H2O + H(+). It functions in the pathway purine metabolism; 7-cyano-7-deazaguanine biosynthesis. Functionally, catalyzes the ATP-dependent conversion of 7-carboxy-7-deazaguanine (CDG) to 7-cyano-7-deazaguanine (preQ(0)). This chain is 7-cyano-7-deazaguanine synthase, found in Rhizobium leguminosarum bv. trifolii (strain WSM2304).